Consider the following 503-residue polypeptide: ATP synthase subunit alpha (503 aa).

169–176 (GDRKTGKT) contributes to the ATP binding site.

This sequence belongs to the ATPase alpha/beta chains family. As to quaternary structure, F-type ATPases have 2 components, CF(1) - the catalytic core - and CF(0) - the membrane proton channel. CF(1) has five subunits: alpha(3), beta(3), gamma(1), delta(1), epsilon(1). CF(0) has three main subunits: a(1), b(2) and c(9-12). The alpha and beta chains form an alternating ring which encloses part of the gamma chain. CF(1) is attached to CF(0) by a central stalk formed by the gamma and epsilon chains, while a peripheral stalk is formed by the delta and b chains.

The protein resides in the cell membrane. The catalysed reaction is ATP + H2O + 4 H(+)(in) = ADP + phosphate + 5 H(+)(out). In terms of biological role, produces ATP from ADP in the presence of a proton gradient across the membrane. The alpha chain is a regulatory subunit. This Lactobacillus helveticus (strain DPC 4571) protein is ATP synthase subunit alpha.